Consider the following 72-residue polypeptide: Translation initiation factor IF-1 (72 aa).

Residues 1-72 (MAKEEMLEFP…TKGRINYRFK (72 aa)) form the S1-like domain.

This sequence belongs to the IF-1 family. As to quaternary structure, component of the 30S ribosomal translation pre-initiation complex which assembles on the 30S ribosome in the order IF-2 and IF-3, IF-1 and N-formylmethionyl-tRNA(fMet); mRNA recruitment can occur at any time during PIC assembly.

Its subcellular location is the cytoplasm. In terms of biological role, one of the essential components for the initiation of protein synthesis. Stabilizes the binding of IF-2 and IF-3 on the 30S subunit to which N-formylmethionyl-tRNA(fMet) subsequently binds. Helps modulate mRNA selection, yielding the 30S pre-initiation complex (PIC). Upon addition of the 50S ribosomal subunit IF-1, IF-2 and IF-3 are released leaving the mature 70S translation initiation complex. The polypeptide is Translation initiation factor IF-1 (Jannaschia sp. (strain CCS1)).